The sequence spans 233 residues: MGKHTKFGSSDDEGETETSVAKRQKDEKKEKKKEKRDRSRSPHKERERSPKRDRHPEKNESRRHDDRDQERRRDYGRNDRRDDRRGDGSWKTDRNDRNDRRNDFQRRDDKNRLSAEEIAAQRKALWGNKKVAGESSSSNTTDTASSSSEPATGGKNEKLWSSAIAATGVDSSKANKFMRLMGVKNAPKPTDDSSRLSDEKNRQDKMLNDLEKQYAIARETTHMGRGTGFGFGH.

Disordered stretches follow at residues 1-159 and 181-206; these read MGKH…NEKL and MGVK…QDKM. Basic and acidic residues predominate over residues 36–115; it reads RDRSRSPHKE…RRDDKNRLSA (80 aa). Over residues 135–148 the composition is skewed to low complexity; sequence SSSSNTTDTASSSS. A compositionally biased stretch (basic and acidic residues) spans 189-206; the sequence is PTDDSSRLSDEKNRQDKM.

This is an uncharacterized protein from Caenorhabditis elegans.